We begin with the raw amino-acid sequence, 517 residues long: Variant surface glycoprotein MVAT5 (517 aa).

The N-terminal stretch at 1–21 is a signal peptide; the sequence is MIGKAFIILSLLNELPTPTAA. 2 disulfide bridges follow: cysteine 417/cysteine 430 and cysteine 426/cysteine 443. Asparagine 435 is a glycosylation site (N-linked (GlcNAc...) asparagine). Positions 454–470 are enriched in low complexity; that stretch reads QAAQTAGAGEGAAGTTT. Residues 454–487 are disordered; that stretch reads QAAQTAGAGEGAAGTTTDKCKDKKKDDCKSPDCK. Positions 471–487 are enriched in basic and acidic residues; sequence DKCKDKKKDDCKSPDCK. Aspartate 495 carries GPI-anchor amidated aspartate lipidation. Positions 496 to 517 are cleaved as a propeptide — removed in mature form; it reads SSILLNKQFALMVSAAFVALLF.

It localises to the cell membrane. Functionally, VSG forms a coat on the surface of the parasite. The trypanosome evades the immune response of the host by expressing a series of antigenically distinct VSGs from an estimated 1000 VSG genes. In Trypanosoma brucei rhodesiense, this protein is Variant surface glycoprotein MVAT5.